We begin with the raw amino-acid sequence, 227 residues long: Cytochrome c oxidase subunit 2 (227 aa).

At 1 to 26 the chain is on the mitochondrial intermembrane side; it reads MATWSNFNLQNSASPLMEQIIFFHDH. A helical transmembrane segment spans residues 27–51; that stretch reads TLVILIMITILVGYLMISLFFNSYI. Residues 52–62 are Mitochondrial matrix-facing; it reads NRFLLEGQMIE. A helical transmembrane segment spans residues 63–81; it reads LIWTILPAITLIFIALPSL. Residues 82 to 227 are Mitochondrial intermembrane-facing; that stretch reads RLLYLLDELN…NFINWINNYS (146 aa). The Cu cation site is built by histidine 161, cysteine 196, glutamate 198, cysteine 200, histidine 204, and methionine 207. Residue glutamate 198 participates in Mg(2+) binding.

The protein belongs to the cytochrome c oxidase subunit 2 family. In terms of assembly, component of the cytochrome c oxidase (complex IV, CIV), a multisubunit enzyme composed of a catalytic core of 3 subunits and several supernumerary subunits. The complex exists as a monomer or a dimer and forms supercomplexes (SCs) in the inner mitochondrial membrane with ubiquinol-cytochrome c oxidoreductase (cytochrome b-c1 complex, complex III, CIII). Requires Cu cation as cofactor.

The protein resides in the mitochondrion inner membrane. It catalyses the reaction 4 Fe(II)-[cytochrome c] + O2 + 8 H(+)(in) = 4 Fe(III)-[cytochrome c] + 2 H2O + 4 H(+)(out). Functionally, component of the cytochrome c oxidase, the last enzyme in the mitochondrial electron transport chain which drives oxidative phosphorylation. The respiratory chain contains 3 multisubunit complexes succinate dehydrogenase (complex II, CII), ubiquinol-cytochrome c oxidoreductase (cytochrome b-c1 complex, complex III, CIII) and cytochrome c oxidase (complex IV, CIV), that cooperate to transfer electrons derived from NADH and succinate to molecular oxygen, creating an electrochemical gradient over the inner membrane that drives transmembrane transport and the ATP synthase. Cytochrome c oxidase is the component of the respiratory chain that catalyzes the reduction of oxygen to water. Electrons originating from reduced cytochrome c in the intermembrane space (IMS) are transferred via the dinuclear copper A center (CU(A)) of subunit 2 and heme A of subunit 1 to the active site in subunit 1, a binuclear center (BNC) formed by heme A3 and copper B (CU(B)). The BNC reduces molecular oxygen to 2 water molecules using 4 electrons from cytochrome c in the IMS and 4 protons from the mitochondrial matrix. The chain is Cytochrome c oxidase subunit 2 (COII) from Choristoneura rosaceana (Oblique banded leafroller).